The chain runs to 360 residues: Phospho-N-acetylmuramoyl-pentapeptide-transferase (360 aa).

The next 10 helical transmembrane spans lie at 21-41, 73-93, 94-114, 132-152, 168-188, 199-219, 239-259, 263-283, 288-308, and 338-358; these read YLSF…LWMG, TMGG…WADL, TNPY…VGFV, WKYF…YAHG, VMPQ…VGTS, GLAI…AWAT, LVVV…FNTY, VFMG…IAVL, FVLV…ILQV, and VIVR…ATLK.

This sequence belongs to the glycosyltransferase 4 family. MraY subfamily. The cofactor is Mg(2+).

It localises to the cell inner membrane. It catalyses the reaction UDP-N-acetyl-alpha-D-muramoyl-L-alanyl-gamma-D-glutamyl-meso-2,6-diaminopimeloyl-D-alanyl-D-alanine + di-trans,octa-cis-undecaprenyl phosphate = di-trans,octa-cis-undecaprenyl diphospho-N-acetyl-alpha-D-muramoyl-L-alanyl-D-glutamyl-meso-2,6-diaminopimeloyl-D-alanyl-D-alanine + UMP. The protein operates within cell wall biogenesis; peptidoglycan biosynthesis. Catalyzes the initial step of the lipid cycle reactions in the biosynthesis of the cell wall peptidoglycan: transfers peptidoglycan precursor phospho-MurNAc-pentapeptide from UDP-MurNAc-pentapeptide onto the lipid carrier undecaprenyl phosphate, yielding undecaprenyl-pyrophosphoryl-MurNAc-pentapeptide, known as lipid I. The chain is Phospho-N-acetylmuramoyl-pentapeptide-transferase from Vibrio cholerae serotype O1 (strain M66-2).